Reading from the N-terminus, the 254-residue chain is Fructose-1,6-bisphosphatase (254 aa).

Mg(2+) is bound by residues Glu-68, Asp-84, Leu-86, and Asp-87. Residues 87 to 89 (DGS), Arg-171, Ile-176, and Arg-195 contribute to the substrate site. A Mg(2+)-binding site is contributed by Asp-202.

This sequence belongs to the inositol monophosphatase superfamily. FBPase class 4 family. As to quaternary structure, homodimer. The cofactor is Mg(2+).

It carries out the reaction beta-D-fructose 1,6-bisphosphate + H2O = beta-D-fructose 6-phosphate + phosphate. Inhibited by Li(+), ADP, ATP and glucose-6-phosphate. Functionally, catalyzes the conversion of D-fructose 1,6-bisphosphate to D-fructose 6-phosphate. In vitro, also has weak activity with inositol-1-phosphate, glucose-1-phosphate and glycerol-2-phosphate. The protein is Fructose-1,6-bisphosphatase of Pyrococcus furiosus (strain ATCC 43587 / DSM 3638 / JCM 8422 / Vc1).